The primary structure comprises 237 residues: Purine nucleoside phosphorylase DeoD-type (237 aa).

A purine D-ribonucleoside is bound at residue histidine 4. Phosphate-binding positions include glycine 20, arginine 24, arginine 43, and 87–90 (RVGT). A purine D-ribonucleoside-binding positions include 179–181 (EME) and 203–204 (SD). Aspartate 204 (proton donor) is an active-site residue.

The protein belongs to the PNP/UDP phosphorylase family. As to quaternary structure, homohexamer; trimer of homodimers.

The catalysed reaction is a purine D-ribonucleoside + phosphate = a purine nucleobase + alpha-D-ribose 1-phosphate. It carries out the reaction a purine 2'-deoxy-D-ribonucleoside + phosphate = a purine nucleobase + 2-deoxy-alpha-D-ribose 1-phosphate. Functionally, catalyzes the reversible phosphorolytic breakdown of the N-glycosidic bond in the beta-(deoxy)ribonucleoside molecules, with the formation of the corresponding free purine bases and pentose-1-phosphate. This is Purine nucleoside phosphorylase DeoD-type from Exiguobacterium sp. (strain ATCC BAA-1283 / AT1b).